A 383-amino-acid polypeptide reads, in one-letter code: Outer membrane protein assembly factor BamB (383 aa).

The N-terminal stretch at 1–23 (MMLLKRCNRRALVALAAVLLLAA) is a signal peptide. Residue cysteine 24 is the site of N-palmitoyl cysteine attachment. Cysteine 24 is lipidated: S-diacylglycerol cysteine.

This sequence belongs to the BamB family. Part of the Bam complex.

The protein resides in the cell outer membrane. Its function is as follows. Part of the outer membrane protein assembly complex, which is involved in assembly and insertion of beta-barrel proteins into the outer membrane. In Alkalilimnicola ehrlichii (strain ATCC BAA-1101 / DSM 17681 / MLHE-1), this protein is Outer membrane protein assembly factor BamB.